A 261-amino-acid chain; its full sequence is Putative [LysW]-aminoadipate/[LysW]-glutamate kinase (261 aa).

Substrate is bound by residues 35 to 36, Arg-62, and Asn-162; that span reads GG.

The protein belongs to the acetylglutamate kinase family. LysZ subfamily.

It is found in the cytoplasm. It catalyses the reaction [amino-group carrier protein]-C-terminal-N-(1,4-dicarboxybutan-1-yl)-L-glutamine + ATP = [amino-group carrier protein]-C-terminal-N-(1-carboxy-5-phosphooxy-5-oxopentan-1-yl)-L-glutamine + ADP. The catalysed reaction is [amino-group carrier protein]-C-terminal-gamma-(L-glutamyl)-L-glutamate + ATP = [amino-group carrier protein]-C-terminal-gamma-(5-phospho-L-glutamyl)-L-glutamate + ADP. It participates in amino-acid biosynthesis; L-lysine biosynthesis via AAA pathway; L-lysine from L-alpha-aminoadipate (Thermus route): step 2/5. Its pathway is amino-acid biosynthesis; L-arginine biosynthesis. Its function is as follows. Involved in both the arginine and lysine biosynthetic pathways. Phosphorylates the LysW-bound precursors glutamate (for arginine biosynthesis), respectively alpha-aminoadipate (for lysine biosynthesis). The chain is Putative [LysW]-aminoadipate/[LysW]-glutamate kinase from Pyrobaculum calidifontis (strain DSM 21063 / JCM 11548 / VA1).